We begin with the raw amino-acid sequence, 256 residues long: Protein LIKE COV 1 (256 aa).

Positions 1 to 10 (MANRERDREL) are enriched in basic and acidic residues. Positions 1–39 (MANRERDRELLIPVADFGDKDDGSSSKPSSSSSASSSHQ) are disordered. At 1–60 (MANRERDRELLIPVADFGDKDDGSSSKPSSSSSASSSHQSGHETLSLFIRGWASKKFMTG) the chain is on the cytoplasmic side. Residues 25–39 (SSKPSSSSSASSSHQ) are compositionally biased toward low complexity. Residues 61-81 (CVILLPIAVTFYTTWWFIHFV) traverse the membrane as a helical segment. Topologically, residues 82 to 93 (DGFFSPIYALLG) are extracellular. The helical transmembrane segment at 94–114 (INIFGFGFLTSIAFIFLVGVF) threads the bilayer. Topologically, residues 115 to 256 (MSSWLGASVL…KPLASIGNES (142 aa)) are cytoplasmic.

The protein belongs to the plant COV1 protein family. As to expression, expressed at low levels in flowers, stems, roots and leaves.

The protein localises to the membrane. The protein is Protein LIKE COV 1 of Arabidopsis thaliana (Mouse-ear cress).